A 333-amino-acid polypeptide reads, in one-letter code: Isoaspartyl peptidase/L-asparaginase (333 aa).

Thr191 (nucleophile) is an active-site residue. Substrate is bound by residues 219 to 222 (RVGD) and 242 to 245 (TGHG).

The protein belongs to the Ntn-hydrolase family. In terms of assembly, heterodimer of an alpha and beta chain produced by autocleavage. This heterodimer may then dimerize in turn, giving rise to a heterotetramer. In terms of processing, cleaved into an alpha and beta chain by autocatalysis; this activates the enzyme. The N-terminal residue of the beta subunit is responsible for the nucleophile hydrolase activity. As to expression, present in testis, brain, liver, kidney, heart and skeletal muscle. In brain, specifically present in the astrocytic lineage. Present in sperm (at protein level).

The protein resides in the cytoplasm. The enzyme catalyses L-asparagine + H2O = L-aspartate + NH4(+). It catalyses the reaction Cleavage of a beta-linked Asp residue from the N-terminus of a polypeptide.. Functionally, has both L-asparaginase and beta-aspartyl peptidase activity. Is highly active with L-Asp beta-methyl ester. Besides, has catalytic activity toward beta-aspartyl dipeptides and their methyl esters, including beta-L-Asp-L-Phe, beta-L-Asp-L-Phe methyl ester (aspartame), beta-L-Asp-L-Ala, beta-L-Asp-L-Leu and beta-L-Asp-L-Lys. Does not have aspartylglucosaminidase activity and is inactive toward GlcNAc-L-Asn. Likewise, has no activity toward glutamine. May be involved in the production of L-aspartate, which can act as an excitatory neurotransmitter in some brain regions. This is Isoaspartyl peptidase/L-asparaginase (Asrgl1) from Rattus norvegicus (Rat).